A 257-amino-acid polypeptide reads, in one-letter code: Imidazole glycerol phosphate synthase subunit HisF (257 aa).

Active-site residues include Asp12 and Asp131.

This sequence belongs to the HisA/HisF family. Heterodimer of HisH and HisF.

The protein localises to the cytoplasm. The catalysed reaction is 5-[(5-phospho-1-deoxy-D-ribulos-1-ylimino)methylamino]-1-(5-phospho-beta-D-ribosyl)imidazole-4-carboxamide + L-glutamine = D-erythro-1-(imidazol-4-yl)glycerol 3-phosphate + 5-amino-1-(5-phospho-beta-D-ribosyl)imidazole-4-carboxamide + L-glutamate + H(+). It functions in the pathway amino-acid biosynthesis; L-histidine biosynthesis; L-histidine from 5-phospho-alpha-D-ribose 1-diphosphate: step 5/9. IGPS catalyzes the conversion of PRFAR and glutamine to IGP, AICAR and glutamate. The HisF subunit catalyzes the cyclization activity that produces IGP and AICAR from PRFAR using the ammonia provided by the HisH subunit. This is Imidazole glycerol phosphate synthase subunit HisF from Burkholderia ambifaria (strain MC40-6).